The sequence spans 88 residues: Small ribosomal subunit protein bS18A (88 aa).

It belongs to the bacterial ribosomal protein bS18 family. As to quaternary structure, part of the 30S ribosomal subunit. Forms a tight heterodimer with protein bS6.

In terms of biological role, binds as a heterodimer with protein bS6 to the central domain of the 16S rRNA, where it helps stabilize the platform of the 30S subunit. This Mycolicibacterium gilvum (strain PYR-GCK) (Mycobacterium gilvum (strain PYR-GCK)) protein is Small ribosomal subunit protein bS18A.